Consider the following 499-residue polypeptide: Alpha-amylase 3 (499 aa).

Ca(2+) is bound by residues Asn127 and Asp183. Catalysis depends on Asp213, which acts as the Nucleophile. Ca(2+) is bound at residue His217. The active-site Proton donor is the Glu248.

Belongs to the glycosyl hydrolase 13 family. In terms of assembly, monomer. Ca(2+) serves as cofactor.

The protein localises to the cytoplasm. It carries out the reaction Endohydrolysis of (1-&gt;4)-alpha-D-glucosidic linkages in polysaccharides containing three or more (1-&gt;4)-alpha-linked D-glucose units.. The polypeptide is Alpha-amylase 3 (amyC) (Dictyoglomus thermophilum (strain ATCC 35947 / DSM 3960 / H-6-12)).